An 87-amino-acid chain; its full sequence is MKTKLREMLRFPCFFTYKIIGLAQPELIDQIIKVIQIQIPGDYTPQVKSSNRGNYLSVSITICAKNFEQIECLYHEISKINIVRMVL.

Belongs to the UPF0250 family.

This Buchnera aphidicola subsp. Acyrthosiphon pisum (strain Tuc7) protein is UPF0250 protein BUAPTUC7_482.